Reading from the N-terminus, the 278-residue chain is Putative glycosyltransferase EpsE (278 aa).

The protein belongs to the glycosyltransferase 2 family.

In terms of biological role, may be involved in the production of the exopolysaccharide (EPS) component of the extracellular matrix during biofilm formation. EPS is responsible for the adhesion of chains of cells into bundles. Required for biofilm maintenance. The protein is Putative glycosyltransferase EpsE (epsE) of Bacillus subtilis (strain 168).